The following is a 1053-amino-acid chain: Phosphoenolpyruvate carboxylase (1053 aa).

His-246 is a catalytic residue. Residues 461 to 473 (RNTRLQQQQEKDP) are compositionally biased toward basic and acidic residues. The segment at 461–480 (RNTRLQQQQEKDPTTPLPEY) is disordered. The active site involves Lys-699.

Belongs to the PEPCase type 1 family. It depends on Mg(2+) as a cofactor.

It carries out the reaction oxaloacetate + phosphate = phosphoenolpyruvate + hydrogencarbonate. Its function is as follows. Forms oxaloacetate, a four-carbon dicarboxylic acid source for the tricarboxylic acid cycle. In Synechococcus sp. (strain ATCC 27144 / PCC 6301 / SAUG 1402/1) (Anacystis nidulans), this protein is Phosphoenolpyruvate carboxylase (ppc).